The following is a 440-amino-acid chain: Trigger factor (440 aa).

The 86-residue stretch at 163-248 (GEIVSVTFEA…VHVIKERTLP (86 aa)) folds into the PPIase FKBP-type domain.

This sequence belongs to the FKBP-type PPIase family. Tig subfamily.

It localises to the cytoplasm. It catalyses the reaction [protein]-peptidylproline (omega=180) = [protein]-peptidylproline (omega=0). Its function is as follows. Involved in protein export. Acts as a chaperone by maintaining the newly synthesized protein in an open conformation. Functions as a peptidyl-prolyl cis-trans isomerase. In Solidesulfovibrio magneticus (strain ATCC 700980 / DSM 13731 / RS-1) (Desulfovibrio magneticus), this protein is Trigger factor.